A 966-amino-acid chain; its full sequence is Leucine--tRNA ligase (966 aa).

The 'HIGH' region signature appears at 41–51 (PYLNGNLHAGH). A 'KMSKS' region motif is present at residues 632–636 (KMSKS). Residue lysine 635 coordinates ATP.

Belongs to the class-I aminoacyl-tRNA synthetase family.

It localises to the cytoplasm. The catalysed reaction is tRNA(Leu) + L-leucine + ATP = L-leucyl-tRNA(Leu) + AMP + diphosphate. This chain is Leucine--tRNA ligase, found in Methanosarcina barkeri (strain Fusaro / DSM 804).